A 510-amino-acid chain; its full sequence is MSASSTPRPVMLVILDGFGWREDESDNAVRLANTPTFDTLWATSPHAFLKTSGEDVGLPDGQMGNSEVGHLNIGAGRVVMQELPRISRSARDGSLAQNPALLEFIAALKASGGTCHLMGLISPGGVHAHQDHVVALTKIVSAAGVPVAVHIFSDGRDTAPRSGEDFIGKFLKELPDSVQIATLSGRYYAMDRDRRWERVALAVEAIRDAKGPHAKDALSALQASYASDKGDEFVLPTVLGDYAGMKDGDGILACNFRADRIRQLLDVLVLPDFTEYDSGRKVKFAAVCGMSRYSDHLAPYMSILFPKVPLDDLLGDVVAKAGRTQLRMAETEKYPHVTYFLNGGREVQFDGEERILVPSPKVATYDLQPEMSAPELTDKAVAAIESGKFDMIVLNFANPDMVGHTGSLSAAIKACETVDQGLGRINDAIVKAGGVLLVTADHGNCETMRDPVTGGAHTSHTLNVVPVILAHARGETIHDGRLADLAPTMLALMGVKQPDAMTGVSLLESA.

Residues Asp16 and Ser66 each coordinate Mn(2+). The Phosphoserine intermediate role is filled by Ser66. Substrate contacts are provided by residues His127, 156 to 157 (RD), Arg186, Arg192, 257 to 260 (RADR), and Lys333. Mn(2+) contacts are provided by Asp400, His404, Asp441, His442, and His460.

Belongs to the BPG-independent phosphoglycerate mutase family. Monomer. Mn(2+) is required as a cofactor.

The enzyme catalyses (2R)-2-phosphoglycerate = (2R)-3-phosphoglycerate. It functions in the pathway carbohydrate degradation; glycolysis; pyruvate from D-glyceraldehyde 3-phosphate: step 3/5. Its function is as follows. Catalyzes the interconversion of 2-phosphoglycerate and 3-phosphoglycerate. In Gluconobacter oxydans (strain 621H) (Gluconobacter suboxydans), this protein is 2,3-bisphosphoglycerate-independent phosphoglycerate mutase.